A 292-amino-acid chain; its full sequence is 4-hydroxybenzoate octaprenyltransferase (292 aa).

The next 9 helical transmembrane spans lie at 24-44 (IGTL…NAGM), 47-67 (LTNF…GCVI), 97-117 (AISL…MLSV), 119-139 (TILL…MKRY), 145-165 (VVLG…SINA), 171-191 (WLLF…YAMV), 214-234 (HIIG…GALN), 238-258 (LSYW…QVLI), and 270-290 (FLNN…SYPV).

Belongs to the UbiA prenyltransferase family. Requires Mg(2+) as cofactor.

It localises to the cell inner membrane. The catalysed reaction is all-trans-octaprenyl diphosphate + 4-hydroxybenzoate = 4-hydroxy-3-(all-trans-octaprenyl)benzoate + diphosphate. It functions in the pathway cofactor biosynthesis; ubiquinone biosynthesis. Its function is as follows. Catalyzes the prenylation of para-hydroxybenzoate (PHB) with an all-trans polyprenyl group. Mediates the second step in the final reaction sequence of ubiquinone-8 (UQ-8) biosynthesis, which is the condensation of the polyisoprenoid side chain with PHB, generating the first membrane-bound Q intermediate 3-octaprenyl-4-hydroxybenzoate. The sequence is that of 4-hydroxybenzoate octaprenyltransferase from Pseudoalteromonas translucida (strain TAC 125).